The chain runs to 266 residues: Glucosamine-6-phosphate deaminase (266 aa).

D72 serves as the catalytic Proton acceptor; for enolization step. The For ring-opening step role is filled by D141. H143 (proton acceptor; for ring-opening step) is an active-site residue. E148 functions as the For ring-opening step in the catalytic mechanism.

It belongs to the glucosamine/galactosamine-6-phosphate isomerase family. NagB subfamily. Homohexamer.

The catalysed reaction is alpha-D-glucosamine 6-phosphate + H2O = beta-D-fructose 6-phosphate + NH4(+). The protein operates within amino-sugar metabolism; N-acetylneuraminate degradation; D-fructose 6-phosphate from N-acetylneuraminate: step 5/5. Its activity is regulated as follows. Allosterically activated by N-acetylglucosamine 6-phosphate (GlcNAc6P). In terms of biological role, catalyzes the reversible isomerization-deamination of glucosamine 6-phosphate (GlcN6P) to form fructose 6-phosphate (Fru6P) and ammonium ion. This Enterobacter sp. (strain 638) protein is Glucosamine-6-phosphate deaminase.